We begin with the raw amino-acid sequence, 469 residues long: Glutamate--tRNA ligase (469 aa).

The 'HIGH' region motif lies at 11–21 (PSPTGFIHLGN). The segment covering 118–131 (GEKPRYDGTWRPEP) has biased composition (basic and acidic residues). The interval 118 to 138 (GEKPRYDGTWRPEPGKVLPEP) is disordered. The short motif at 243-247 (KMSKR) is the 'KMSKS' region element. Lys246 contributes to the ATP binding site.

It belongs to the class-I aminoacyl-tRNA synthetase family. Glutamate--tRNA ligase type 1 subfamily. As to quaternary structure, monomer.

It localises to the cytoplasm. It catalyses the reaction tRNA(Glu) + L-glutamate + ATP = L-glutamyl-tRNA(Glu) + AMP + diphosphate. Its function is as follows. Catalyzes the attachment of glutamate to tRNA(Glu) in a two-step reaction: glutamate is first activated by ATP to form Glu-AMP and then transferred to the acceptor end of tRNA(Glu). The chain is Glutamate--tRNA ligase from Burkholderia thailandensis (strain ATCC 700388 / DSM 13276 / CCUG 48851 / CIP 106301 / E264).